Here is a 260-residue protein sequence, read N- to C-terminus: Small ribosomal subunit protein eS1 (260 aa).

N-acetylalanine; partial is present on Ala2.

Belongs to the eukaryotic ribosomal protein eS1 family. As to quaternary structure, component of the small ribosomal subunit. Mature ribosomes consist of a small (40S) and a large (60S) subunit. The 40S subunit contains about 33 different proteins and 1 molecule of RNA (18S). The 60S subunit contains about 49 different proteins and 3 molecules of RNA (25S, 5.8S and 5S).

It localises to the cytoplasm. In Mycosarcoma maydis (Corn smut fungus), this protein is Small ribosomal subunit protein eS1.